We begin with the raw amino-acid sequence, 345 residues long: UDP-3-O-acylglucosamine N-acyltransferase 3 (345 aa).

The active-site Proton acceptor is H236.

Belongs to the transferase hexapeptide repeat family. LpxD subfamily. Homotrimer.

The enzyme catalyses a UDP-3-O-[(3R)-3-hydroxyacyl]-alpha-D-glucosamine + a (3R)-hydroxyacyl-[ACP] = a UDP-2-N,3-O-bis[(3R)-3-hydroxyacyl]-alpha-D-glucosamine + holo-[ACP] + H(+). It functions in the pathway bacterial outer membrane biogenesis; LPS lipid A biosynthesis. Functionally, catalyzes the N-acylation of UDP-3-O-acylglucosamine using 3-hydroxyacyl-ACP as the acyl donor. Is involved in the biosynthesis of lipid A, a phosphorylated glycolipid that anchors the lipopolysaccharide to the outer membrane of the cell. This is UDP-3-O-acylglucosamine N-acyltransferase 3 from Gloeobacter violaceus (strain ATCC 29082 / PCC 7421).